Consider the following 136-residue polypeptide: Small ribosomal subunit protein eS8 (136 aa).

This sequence belongs to the eukaryotic ribosomal protein eS8 family. Part of the 30S ribosomal subunit.

This chain is Small ribosomal subunit protein eS8 (rps8e), found in Aeropyrum pernix (strain ATCC 700893 / DSM 11879 / JCM 9820 / NBRC 100138 / K1).